A 300-amino-acid chain; its full sequence is MKIAILSRDGTLYSCKRLREAAIQRGHLVEVLDPLSCYMNINPAASSIHYKGRKLPHFDAVIPRIGSAITFYGTAALRQFEMLGSYPLNESVAIARARDKLRSMQLLARQGIDLPVTGIAHSPDDTSDLIDMVGGAPLVVKLVEGTQGIGVVLAETRQAAESVIDAFRGLNAHILVQEYIKEAKGRDIRCLVVGDEVVAAIERRAKEGDFRSNLHRGGAASIACITEREREIALKAARTMALDVAGVDILRAERGPLVMEVNASPGLEGIEKTTGVDIAGKMIRWIERHATPEFCLKTGG.

In terms of domain architecture, ATP-grasp spans 104-287 (MQLLARQGID…IAGKMIRWIE (184 aa)). ATP contacts are provided by residues Lys-141, 178–179 (EY), Asp-187, and 211–213 (RSN). Residues Asp-248, Glu-260, and Asn-262 each contribute to the Mg(2+) site. Mn(2+)-binding residues include Asp-248, Glu-260, and Asn-262.

This sequence belongs to the RimK family. The cofactor is Mg(2+). Mn(2+) serves as cofactor.

Its function is as follows. An L-glutamate ligase that catalyzes the ATP-dependent post-translational addition of glutamate residues to the C-terminus of ribosomal protein bS6 (RpsF). Is also able to catalyze the synthesis of poly-alpha-glutamate in vitro, via ATP hydrolysis from unprotected glutamate as substrate. The number of glutamate residues added to either RpsF or to poly-alpha-glutamate changes with pH. The sequence is that of Ribosomal protein bS6--L-glutamate ligase from Escherichia fergusonii (strain ATCC 35469 / DSM 13698 / CCUG 18766 / IAM 14443 / JCM 21226 / LMG 7866 / NBRC 102419 / NCTC 12128 / CDC 0568-73).